We begin with the raw amino-acid sequence, 44 residues long: Photosystem I reaction center subunit IX (44 aa).

Residues 7-27 (YLSAAPVLSTIWFGALAGLLI) traverse the membrane as a helical segment.

It belongs to the PsaJ family.

Its subcellular location is the plastid. It localises to the chloroplast thylakoid membrane. Its function is as follows. May help in the organization of the PsaE and PsaF subunits. The sequence is that of Photosystem I reaction center subunit IX from Pelargonium hortorum (Common geranium).